We begin with the raw amino-acid sequence, 60 residues long: Large ribosomal subunit protein bL32 (60 aa).

The segment at 1-60 (MAVQQNKKSPSKRGMHRSHDALTNPPLAIEPTTGETHLRHHISPNGFYRGKKVIKTKNDD) is disordered. Residues 49-60 (RGKKVIKTKNDD) are compositionally biased toward basic residues.

This sequence belongs to the bacterial ribosomal protein bL32 family.

This chain is Large ribosomal subunit protein bL32, found in Nitrosomonas eutropha (strain DSM 101675 / C91 / Nm57).